Here is a 7756-residue protein sequence, read N- to C-terminus: Linear gramicidin synthase subunit C (7756 aa).

Carrier domains lie at Glu977–Gln1052, Ala2042–Ser2116, Ala3557–Leu3632, Ala4621–Asp4695, Ala6141–Leu6216, and Ala7200–Val7274. O-(pantetheine 4'-phosphoryl)serine occurs at positions 1012, 2077, 3592, 4656, 6176, and 7235.

Belongs to the ATP-dependent AMP-binding enzyme family. In terms of assembly, large multienzyme complex composed of 4 subunits; LgrA, LgrB, LgrC and LgrD. Pantetheine 4'-phosphate serves as cofactor.

Functionally, activates the 7th to 12th amino acids (Val, D-Val, Trp, D-Leu, Xaa and D-Leu) in linear gramicidin and catalyzes the formation of the peptide bond between them. This enzyme is also responsible for the epimerization of the 8th (D-Val), the 10th (D-Leu) and 12th (D-Leu) amino acids. The 11th (Xaa) amino acid is Trp in linear gramicidin A; Phe in linear gramicidin B and Tyr in linear gramicidin C. The chain is Linear gramicidin synthase subunit C (lgrC) from Brevibacillus parabrevis.